A 265-amino-acid chain; its full sequence is RING finger protein 208 (265 aa).

Positions 83–106 are disordered; that stretch reads MPTLEGASHTPPLPRRPRKGSSEL. Ser103 carries the phosphoserine modification. Residues 147-194 form an RING-type zinc finger; the sequence is CPTCGHTYNVTQRRPRVLSCLHSVCEQCLQILYESCPKYKFISCPTCH.

The protein is RING finger protein 208 (Rnf208) of Mus musculus (Mouse).